The following is a 79-amino-acid chain: Defensin-like protein 272 (79 aa).

An N-terminal signal peptide occupies residues 1–24 (MSSKIKFVALLIVVISLLLNNAQS). 4 disulfide bridges follow: C34–C77, C43–C63, C49–C75, and C53–C76.

Belongs to the DEFL family.

Its subcellular location is the secreted. The chain is Defensin-like protein 272 from Arabidopsis thaliana (Mouse-ear cress).